The primary structure comprises 619 residues: Chaperone protein HscA homolog (619 aa).

It belongs to the heat shock protein 70 family.

In terms of biological role, chaperone involved in the maturation of iron-sulfur cluster-containing proteins. Has a low intrinsic ATPase activity which is markedly stimulated by HscB. This is Chaperone protein HscA homolog from Chromobacterium violaceum (strain ATCC 12472 / DSM 30191 / JCM 1249 / CCUG 213 / NBRC 12614 / NCIMB 9131 / NCTC 9757 / MK).